The following is a 177-amino-acid chain: Cytochrome c-type biogenesis protein CcmE (177 aa).

The Cytoplasmic portion of the chain corresponds to 1-7 (MTRKSRR). A helical; Signal-anchor for type II membrane protein transmembrane segment spans residues 8 to 28 (LILIAACGAVLALALGLILSA). Residues 29-177 (MSGSIVFFRS…DATLGQRSER (149 aa)) lie on the Periplasmic side of the membrane. Histidine 122 and tyrosine 126 together coordinate heme. The disordered stretch occupies residues 133–177 (DALKAQGRWQEGGSKEAPKDASKAAPKDAAKPETADATLGQRSER). A compositionally biased stretch (basic and acidic residues) spans 145–166 (GSKEAPKDASKAAPKDAAKPET).

Belongs to the CcmE/CycJ family.

Its subcellular location is the cell inner membrane. Functionally, heme chaperone required for the biogenesis of c-type cytochromes. Transiently binds heme delivered by CcmC and transfers the heme to apo-cytochromes in a process facilitated by CcmF and CcmH. The polypeptide is Cytochrome c-type biogenesis protein CcmE (Methylorubrum extorquens (strain PA1) (Methylobacterium extorquens)).